Here is a 140-residue protein sequence, read N- to C-terminus: Putative peptidyl-tRNA hydrolase PTRHD1 (140 aa).

It belongs to the PTH2 family. PTRHD1 subfamily.

It catalyses the reaction an N-acyl-L-alpha-aminoacyl-tRNA + H2O = an N-acyl-L-amino acid + a tRNA + H(+). Its function is as follows. As a putative peptidyl-tRNA hydrolase, it might be involved in releasing tRNAs from the ribosome during protein synthesis. Some evidence, however, suggests that it lacks peptidyl-tRNA hydrolase activity. The polypeptide is Putative peptidyl-tRNA hydrolase PTRHD1 (Ptrhd1) (Mus musculus (Mouse)).